The primary structure comprises 262 residues: Sulfur carrier protein FdhD (262 aa).

Cysteine 107 acts as the Cysteine persulfide intermediate in catalysis.

It belongs to the FdhD family.

It is found in the cytoplasm. Its function is as follows. Required for formate dehydrogenase (FDH) activity. Acts as a sulfur carrier protein that transfers sulfur from IscS to the molybdenum cofactor prior to its insertion into FDH. This is Sulfur carrier protein FdhD from Bacillus pumilus (strain SAFR-032).